Here is a 190-residue protein sequence, read N- to C-terminus: Large ribosomal subunit protein bL25 (190 aa).

It belongs to the bacterial ribosomal protein bL25 family. CTC subfamily. As to quaternary structure, part of the 50S ribosomal subunit; part of the 5S rRNA/L5/L18/L25 subcomplex. Contacts the 5S rRNA. Binds to the 5S rRNA independently of L5 and L18.

This is one of the proteins that binds to the 5S RNA in the ribosome where it forms part of the central protuberance. This Neisseria meningitidis serogroup A / serotype 4A (strain DSM 15465 / Z2491) protein is Large ribosomal subunit protein bL25.